The chain runs to 1164 residues: Phytochrome D (1164 aa).

The segment at 1-55 (MVSGGGSKTSGGEAASSGHRRSRHTSAAEQAQSSANKALRSQNQQPQNHGGGTES) is disordered. The span at 25 to 55 (TSAAEQAQSSANKALRSQNQQPQNHGGGTES) shows a compositional bias: polar residues. A GAF domain is found at 255 to 437 (DIKLLCDTVV…AFGLQLNMEL (183 aa)). Cys-360 serves as a coordination point for phytochromobilin. PAS domains follow at residues 656-727 (VARE…LKGD) and 790-861 (DYKA…MIVL). Residues 938–1157 (YIFQVIKNPL…LIVIELPVPL (220 aa)) form the Histidine kinase domain.

It belongs to the phytochrome family. Homodimer. In terms of processing, contains one covalently linked phytochromobilin chromophore.

In terms of biological role, regulatory photoreceptor which exists in two forms that are reversibly interconvertible by light: the Pr form that absorbs maximally in the red region of the spectrum and the Pfr form that absorbs maximally in the far-red region. Photoconversion of Pr to Pfr induces an array of morphogenic responses, whereas reconversion of Pfr to Pr cancels the induction of those responses. Pfr controls the expression of a number of nuclear genes including those encoding the small subunit of ribulose-bisphosphate carboxylase, chlorophyll A/B binding protein, protochlorophyllide reductase, rRNA, etc. It also controls the expression of its own gene(s) in a negative feedback fashion. This is Phytochrome D (PHYD) from Arabidopsis thaliana (Mouse-ear cress).